The primary structure comprises 605 residues: MLRQYKEQIKSSPQSCGVYKMVGDKNKVLYVGKAKNLKSRLSDYLQFENLSERIRVMLLQVIKVEIFITENEIEALLLEAQLIKSLKPLYNIVLKDGKFYPYITISKHDYPRIAKYRGKFKKNEFHYYGPFTSAAAVKQTILSLQKAFLLRVCSDQYFSSTKRPCIEYQIKRCSAPCINKITKDDYCQSVKQARNTLLGRNKEVKEQLLFTMRKCSSEENYELAAIYRDRVKFLEQIQIQHTDFSFEKDADFFSIVREEDLACISVLSFRNKDNYGSTPYFAENCGDHSNDEILSTFLVNFYNSANIPPIQIYVPDSIVDKEIIEQALYKVAQKPVKVLHAKNKKERDLLKFVYDNSQHSLEQKLIDYRNNLEKLEELSKIFLLPNIPKRIEVYDNSHISGSQQIGVMIVAGQEGFLKSEYRKFTIKEKFSGDDYKMMREVLTRRFSGNIKGIIPDFLLIDGGPGHVSIVQNVLEVLNINVPFACMAKGPDRNAGNERFYMLGREEFSLANDSKVMLYLQSLRNEAHRFAITSHRKKRDKQFIVSQLSKIPGIGNKRKKALMSYFGSVKNISRASLAEIQNVPGISKGLAEVILKYVNYKRGVLE.

A GIY-YIG domain is found at glutamine 14–isoleucine 92. A UVR domain is found at lysine 202–isoleucine 237.

The protein belongs to the UvrC family. Interacts with UvrB in an incision complex.

It localises to the cytoplasm. Functionally, the UvrABC repair system catalyzes the recognition and processing of DNA lesions. UvrC both incises the 5' and 3' sides of the lesion. The N-terminal half is responsible for the 3' incision and the C-terminal half is responsible for the 5' incision. The polypeptide is UvrABC system protein C (Wolbachia pipientis wMel).